An 880-amino-acid polypeptide reads, in one-letter code: Leucine--tRNA ligase (880 aa).

Positions 46–56 (PYPSGALHMGH) match the 'HIGH' region motif. The 'KMSKS' region motif lies at 638-642 (KMSKS). Lys-641 provides a ligand contact to ATP.

The protein belongs to the class-I aminoacyl-tRNA synthetase family.

The protein resides in the cytoplasm. The catalysed reaction is tRNA(Leu) + L-leucine + ATP = L-leucyl-tRNA(Leu) + AMP + diphosphate. This is Leucine--tRNA ligase from Xanthomonas oryzae pv. oryzae (strain MAFF 311018).